The following is a 424-amino-acid chain: Protein arginine N-methyltransferase 2 (424 aa).

Disordered regions lie at residues 67 to 89 (DEAQ…EQKS) and 151 to 212 (YEPL…SSRY). Polar residues predominate over residues 71–89 (TETNGVNGETSSASTEQKS). Low complexity-rich tracts occupy residues 163–173 (TGQGEDAANEP) and 187–201 (ETTA…ASTE). The RMT2 domain maps to 205-424 (PDVTSSRYLD…YRLPLCKFMD (220 aa)). Residues Tyr-212, Met-241, 261–266 (HGMGIV), 282–284 (EAH), 309–310 (WQ), and Asp-329 each bind S-adenosyl-L-methionine.

Belongs to the class I-like SAM-binding methyltransferase superfamily. RMT2 methyltransferase family. In terms of assembly, monomer.

It is found in the cytoplasm. It localises to the nucleus. S-adenosyl-L-methionine-dependent protein-arginine N-methyltransferase that methylates the delta-nitrogen atom of arginine residues to form N5-methylarginine (type IV) in target proteins. Monomethylates ribosomal protein L12. In Aspergillus fumigatus (strain ATCC MYA-4609 / CBS 101355 / FGSC A1100 / Af293) (Neosartorya fumigata), this protein is Protein arginine N-methyltransferase 2.